Consider the following 757-residue polypeptide: MDVNPTLLFLKVPAQNAISTTFPYTGDPPYSHGTGTGYTMDTVNRTHQYSEKGKWTTNTEIGAPQLNPIDGPLPEDNEPSGYAQTDCVLEAMASLEESHPGIFENSCLETMEVVQQTRVDKLTQGRQTYDWTLNRNQPAATALANTIEVFRSNDLTSNESGRLMDFLKDVMESMNKEEMEITTHFQRKRRVRDNMTKKMVTQRTIGKKKQRLNRKSYLIRALTLNTMTKDAERGKLKRRAIATPGMQIRGFVYFVETLARRICEKLEQSGLPVGGNEKKAKLANVVRKMMTNSQDTELSFTITGDNTKWNENQNPRMFLAMITYITRNQPEWFRNVLSLAPIMFSNKMARLGKGYMFESKSMKLRTQIPAEMLASIDLKYFNDSTKKKIEKIRPLLIDGTASLSPGMMMGMFNMLSTVLGVSILNLGQRKYTKTTYWWDGLQSSDDFALIVNAPNHEGIQAGVDRFYRTCKLVGINMSKKKSYINRTGTFEFTSFFYRYGFVANFSMELPSFGVSGINESADMSIGVTVIKNNMINNDLGPATAQMALQLFIKDYRYTYRCHRGDTQIQTRRSFELKKLWEQTRSKTGLLVSDGGPNLYNIRNLHIPEVCLKWRLMDEDYKGRLCNPLNPFVSHKEIESVNSAVVMPAHGPAKSMEYDAVATTHSWIPKRNRSILNTSQRGVLEDEQMYQKCCNLFEKFFPSSSYRRPVGISSMVEAMVSRARIDARIDFESGRIKKEEFAEIMKICSTIEELRRQK.

Positions 55–82 (WTTNTEIGAPQLNPIDGPLPEDNEPSGY) are disordered. 2 short sequence motifs (nuclear localization signal) span residues 187–195 (RKRRVRDNM) and 203–216 (RTIG…NRKS). The segment at 249 to 256 (RGFVYFVE) is promoter-binding site. A RdRp catalytic domain is found at 286 to 483 (VRKMMTNSQD…GINMSKKKSY (198 aa)).

This sequence belongs to the influenza viruses polymerase PB1 family. In terms of assembly, influenza RNA polymerase is composed of three subunits: PB1, PB2 and PA. Interacts (via N-terminus) with PA (via C-terminus). Interacts (via C-terminus) with PB2 (via N-terminus); this interaction is essential for transcription initiation. In terms of processing, phosphorylated by host PRKCA.

The protein resides in the host nucleus. Its subcellular location is the host cytoplasm. It catalyses the reaction RNA(n) + a ribonucleoside 5'-triphosphate = RNA(n+1) + diphosphate. RNA-dependent RNA polymerase which is responsible for replication and transcription of virus RNA segments. The transcription of viral mRNAs occurs by a unique mechanism called cap-snatching. 5' methylated caps of cellular mRNAs are cleaved after 10-13 nucleotides by PA. In turn, these short capped RNAs are used as primers by PB1 for transcription of viral mRNAs. During virus replication, PB1 initiates RNA synthesis and copy vRNA into complementary RNA (cRNA) which in turn serves as a template for the production of more vRNAs. This chain is RNA-directed RNA polymerase catalytic subunit, found in Influenza A virus (strain A/Equine/London/1416/1973 H7N7).